The following is a 257-amino-acid chain: uncharacterized protein (257 aa).

Residues 1–22 (MIHSKRLKMCLCLIILSVFIGA) form the signal peptide. A lipid anchor (N-palmitoyl cysteine) is attached at Cys-23. Cys-23 carries S-diacylglycerol cysteine lipidation.

This sequence belongs to the staphylococcal tandem lipoprotein family.

It localises to the cell membrane. This is an uncharacterized protein from Staphylococcus aureus (strain MRSA252).